We begin with the raw amino-acid sequence, 405 residues long: uncharacterized protein (405 aa).

This is an uncharacterized protein from Schizosaccharomyces pombe (strain 972 / ATCC 24843) (Fission yeast).